Here is a 218-residue protein sequence, read N- to C-terminus: Ras-related protein RABE1e (218 aa).

22 to 29 (GDSGVGKS) is a GTP binding site. The Effector region signature appears at 44-52 (FITTIGIDF). GTP is bound by residues 70 to 74 (DTAGQ), 128 to 131 (NKAD), and 159 to 160 (SA). Positions 182 to 218 (TESDTKAEPQGIKITKQDANKASSSSTNEKSACCSYV) are disordered. The segment covering 201–211 (NKASSSSTNEK) has biased composition (polar residues). S-geranylgeranyl cysteine attachment occurs at residues Cys214 and Cys215.

This sequence belongs to the small GTPase superfamily. Rab family. In terms of assembly, interacts with PI5K2.

The protein localises to the golgi apparatus membrane. The protein resides in the cell membrane. In terms of biological role, involved in membrane trafficking from the Golgi to the plasma membrane. The chain is Ras-related protein RABE1e (RABE1E) from Arabidopsis thaliana (Mouse-ear cress).